Here is a 506-residue protein sequence, read N- to C-terminus: Glutamate--tRNA ligase (506 aa).

The 'HIGH' region motif lies at P24–L34. The segment at T124–D147 is disordered. A compositionally biased stretch (basic and acidic residues) spans V128 to D147. Positions K268–R272 match the 'KMSKS' region motif. Position 271 (K271) interacts with ATP.

The protein belongs to the class-I aminoacyl-tRNA synthetase family. Glutamate--tRNA ligase type 1 subfamily. As to quaternary structure, monomer.

The protein resides in the cytoplasm. The catalysed reaction is tRNA(Glu) + L-glutamate + ATP = L-glutamyl-tRNA(Glu) + AMP + diphosphate. In terms of biological role, catalyzes the attachment of glutamate to tRNA(Glu) in a two-step reaction: glutamate is first activated by ATP to form Glu-AMP and then transferred to the acceptor end of tRNA(Glu). The protein is Glutamate--tRNA ligase of Kocuria rhizophila (strain ATCC 9341 / DSM 348 / NBRC 103217 / DC2201).